Here is a 1113-residue protein sequence, read N- to C-terminus: MGRVSFSVRVSSVRRARCSCPGRCYLSCRVPPTTALRALNGLGCAGVPGETAGGAVGPGPLGTRGFLSGSKFQAPGSWKDCFGAPPAPDVLRADRSVGEGCPQKLVTANLLRFLLLVLIPCICALIVLLAILLSFVGTLKRVYFKSNDSEPLVTDGEARVPGVIPVNTVYYENTGAPSLPPSQSTPAWTPRAPSPEDQSHRNTSTCMNITHSQCQILPYHSTLAPLLPIVKNMDMEKFLKFFTYLHRLSCYQHILLFGCSLAFPECVVDGDDRHGLLPCRSFCEAAKEGCESVLGMVNSSWPDSLRCSQFRDHTETNSSVRKSCFSLQQEHGKQSLCGGGESFLCTSGLCVPKKLQCNGYNDCDDWSDEAHCNCSKDLFHCGTGKCLHYSLLCDGYDDCGDLSDEQNCDCNLTKEHRCGDGRCIAAEWVCDGDHDCVDKSDEVNCSCHSQGLVECRSGQCIPSTFQCDGDEDCKDGSDEENCSDSQTPCPEGEQGCLGSSCVESCAGSSLCDSDSSLSNCSQCEPITLELCMNLPYNHTHYPNYLGHRTQKEASISWESSLFPALVQTNCYKYLMFFACTILVPKCDVNTGQRIPPCRLLCEHSKERCESVLGIVGLQWPEDTDCNQFPEESSDNQTCLLPNEDVEECSPSHFKCRSGRCVLGSRRCDGQADCDDDSDEENCGCKERALWECPFNKQCLKHTLICDGFPDCPDSMDEKNCSFCQDNELECANHECVPRDLWCDGWVDCSDSSDEWGCVTLSKNGNSSSLLTVHKSAKEHHVCADGWRETLSQLACKQMGLGEPSVTKLIPGQEGQQWLRLYPNWENLNGSTLQELLVYRHSCPSRSEISLLCSKQDCGRRPAARMNKRILGGRTSRPGRWPWQCSLQSEPSGHICGCVLIAKKWVLTVAHCFEGREDADVWKVVFGINNLDHPSGFMQTRFVKTILLHPRYSRAVVDYDISVVELSDDINETSYVRPVCLPSPEEYLEPDTYCYITGWGHMGNKMPFKLQEGEVRIIPLEQCQSYFDMKTITNRMICAGYESGTVDSCMGDSGGPLVCERPGGQWTLFGLTSWGSVCFSKVLGPGVYSNVSYFVGWIERQIYIQTFLQKKSQG.

The Cytoplasmic segment spans residues 1 to 112 (MGRVSFSVRV…QKLVTANLLR (112 aa)). The chain crosses the membrane as a helical; Signal-anchor for type II membrane protein span at residues 113–133 (FLLLVLIPCICALIVLLAILL). Residues 134–1113 (SFVGTLKRVY…QTFLQKKSQG (980 aa)) lie on the Extracellular side of the membrane. N-linked (GlcNAc...) asparagine glycosylation is found at Asn-147, Asn-202, and Asn-208. The interval 176–202 (APSLPPSQSTPAWTPRAPSPEDQSHRN) is disordered. Positions 201 to 327 (RNTSTCMNIT…SSVRKSCFSL (127 aa)) constitute an FZ 1 domain. 8 cysteine pairs are disulfide-bonded: Cys-206/Cys-266, Cys-214/Cys-259, Cys-250/Cys-290, Cys-279/Cys-324, Cys-283/Cys-307, Cys-337/Cys-350, Cys-345/Cys-363, and Cys-357/Cys-372. Residues Asn-298 and Asn-317 are each glycosylated (N-linked (GlcNAc...) asparagine). LDL-receptor class A domains follow at residues 336-372 (LCGG…EAHC), 373-408 (NCSK…EQNC), 409-445 (DCNL…EVNC), and 446-483 (SCHS…ENCS). N-linked (GlcNAc...) asparagine glycosylation occurs at Asn-373. 9 disulfide bridges follow: Cys-374–Cys-386, Cys-381–Cys-399, Cys-393–Cys-408, Cys-410–Cys-423, Cys-418–Cys-436, Cys-430–Cys-445, Cys-447–Cys-460, Cys-455–Cys-473, and Cys-467–Cys-482. The N-linked (GlcNAc...) asparagine glycan is linked to Asn-411. Asn-444 is a glycosylation site (N-linked (GlcNAc...) asparagine). Residues Asn-481, Asn-519, and Asn-537 are each glycosylated (N-linked (GlcNAc...) asparagine). The FZ 2 domain maps to 518 to 641 (SNCSQCEPIT…SSDNQTCLLP (124 aa)). Intrachain disulfides connect Cys-523-Cys-586, Cys-531-Cys-579, Cys-570-Cys-608, Cys-597-Cys-638, Cys-601-Cys-625, Cys-648-Cys-660, Cys-655-Cys-673, Cys-667-Cys-682, Cys-684-Cys-698, Cys-692-Cys-711, Cys-705-Cys-720, Cys-723-Cys-735, Cys-730-Cys-748, and Cys-742-Cys-757. A glycan (N-linked (GlcNAc...) asparagine) is linked at Asn-635. LDL-receptor class A domains lie at 647 to 682 (ECSP…EENC), 683 to 721 (GCKE…KNCS), and 722 to 757 (FCQD…EWGC). N-linked (GlcNAc...) asparagine glycosylation is present at Asn-719. The region spanning 758–853 (VTLSKNGNSS…SRSEISLLCS (96 aa)) is the SRCR domain. N-linked (GlcNAc...) asparagine glycans are attached at residues Asn-765 and Asn-828. 6 disulfide bridges follow: Cys-782/Cys-884, Cys-857/Cys-979, Cys-895/Cys-911, Cys-993/Cys-1058, Cys-1022/Cys-1037, and Cys-1048/Cys-1077. The region spanning 869 to 1102 (ILGGRTSRPG…FVGWIERQIY (234 aa)) is the Peptidase S1 domain. Residues His-910 and Asp-959 each act as charge relay system in the active site. The N-linked (GlcNAc...) asparagine glycan is linked to Asn-970. The Charge relay system role is filled by Ser-1052. Residue Asn-1089 is glycosylated (N-linked (GlcNAc...) asparagine).

Belongs to the peptidase S1 family. Post-translationally, N-glycosylated; required for processing and activation. Activated through proteolytic processing by a trypsin-like protease; cleaved into a N-terminal propeptide and an activated corin protease fragment. Atrial natriuretic peptide-converting enzyme, 180 kDa soluble fragment is produced by cleavage by ADAM10. Cleavage by ADAM10 to produce soluble 180 kDa soluble fragment takes place after the transmembrane region and before FZ 1. In terms of processing, a disulfide bond links the activated corin protease fragment and the N-terminal propeptide. The disulfide bond also links the activated corin protease fragment with Atrial natriuretic peptide-converting enzyme, 180 kDa soluble fragment. As to expression, highly expressed in heart. Also expressed in pregnant uterus.

It is found in the cell membrane. The protein localises to the secreted. Functionally, serine-type endopeptidase involved in atrial natriuretic peptide (NPPA) processing. Converts through proteolytic cleavage the non-functional propeptide NPPA into the active hormone, thereby regulating blood pressure in heart and promoting natriuresis, diuresis and vasodilation. Proteolytic cleavage of pro-NPPA also plays a role in female pregnancy by promoting trophoblast invasion and spiral artery remodeling in uterus. Also acts as a regulator of sodium reabsorption in kidney. May also process pro-NPPB the B-type natriuretic peptide. This chain is Atrial natriuretic peptide-converting enzyme (Corin), found in Mus musculus (Mouse).